A 673-amino-acid polypeptide reads, in one-letter code: Ion-translocating oxidoreductase complex subunit C (673 aa).

4Fe-4S ferredoxin-type domains lie at 368-397 and 407-436; these read MGAP…QQLY and KATA…VQYF. 8 residues coordinate [4Fe-4S] cluster: C377, C380, C383, C387, C416, C419, C422, and C426. The disordered stretch occupies residues 529–554; that stretch reads EARKAQARAKQAGHPMADSATSGDDP.

The protein belongs to the 4Fe4S bacterial-type ferredoxin family. RnfC subfamily. As to quaternary structure, the complex is composed of six subunits: RsxA, RsxB, RsxC, RsxD, RsxE and RsxG. [4Fe-4S] cluster is required as a cofactor.

The protein resides in the cell inner membrane. Part of a membrane-bound complex that couples electron transfer with translocation of ions across the membrane. Required to maintain the reduced state of SoxR. In Salmonella arizonae (strain ATCC BAA-731 / CDC346-86 / RSK2980), this protein is Ion-translocating oxidoreductase complex subunit C.